We begin with the raw amino-acid sequence, 245 residues long: Fibroblast growth factor-binding protein 3 (245 aa).

Residues 1-28 (MSPPRPRASLSPLTLLLLLGGCLLSAAG) form the signal peptide. The tract at residues 33 to 52 (AAGREVTRASRPTVGSSGRF) is disordered. Disulfide bonds link cysteine 60-cysteine 81 and cysteine 91-cysteine 125. Residues 136–216 (CARKTAGSDL…PAAAGFQPNG (81 aa)) are disordered. Positions 170 to 180 (RSRQSVRSPSS) are enriched in low complexity. A disulfide bridge connects residues cysteine 228 and cysteine 236.

The protein belongs to the fibroblast growth factor-binding protein family. As to quaternary structure, interacts with FGF2. In terms of tissue distribution, in the adult, highly expressed in brain with lower levels in ovary. In the embryo, highest levels are found in the brain and spinal cord at 14 dpc and expression is almost completely restricted to the brain by 18 dpc. In the adult and postnatal brain, highly expressed in the orbitofrontal cortex where it is concentrated primarily in differentiated neurons.

The protein localises to the secreted. Functionally, heparin-binding protein which binds to FGF2, prevents binding of FGF2 to heparin and probably inhibits immobilization of FGF2 on extracellular matrix glycosaminoglycans, allowing its release and subsequent activation of FGFR signaling which leads to increased vascular permeability. In Mus musculus (Mouse), this protein is Fibroblast growth factor-binding protein 3 (Fgfbp3).